The following is a 171-amino-acid chain: Ribosome maturation factor RimM (171 aa).

The PRC barrel domain maps to 96–170 (AEGEYYYHEI…LVTIHVTEGL (75 aa)).

The protein belongs to the RimM family. Binds ribosomal protein uS19.

The protein localises to the cytoplasm. Its function is as follows. An accessory protein needed during the final step in the assembly of 30S ribosomal subunit, possibly for assembly of the head region. Essential for efficient processing of 16S rRNA. May be needed both before and after RbfA during the maturation of 16S rRNA. It has affinity for free ribosomal 30S subunits but not for 70S ribosomes. This chain is Ribosome maturation factor RimM, found in Bacillus anthracis (strain A0248).